Consider the following 861-residue polypeptide: Bifunctional uridylyltransferase/uridylyl-removing enzyme (861 aa).

Positions 1–321 (MKNDNRIIKN…VYHQKQKIIR (321 aa)) are uridylyltransferase. The interval 322–678 (LDDEFQLSNR…IMPHHSQGGT (357 aa)) is uridylyl-removing. The region spanning 440–562 (VDQHTLFVIR…LPHAKYLDYL (123 aa)) is the HD domain. 2 ACT domains span residues 679 to 760 (EVFI…AVSR) and 788 to 861 (QLFL…KSKY).

This sequence belongs to the GlnD family. The cofactor is Mg(2+).

The enzyme catalyses [protein-PII]-L-tyrosine + UTP = [protein-PII]-uridylyl-L-tyrosine + diphosphate. It carries out the reaction [protein-PII]-uridylyl-L-tyrosine + H2O = [protein-PII]-L-tyrosine + UMP + H(+). Its activity is regulated as follows. Uridylyltransferase (UTase) activity is inhibited by glutamine, while glutamine activates uridylyl-removing (UR) activity. Its function is as follows. Modifies, by uridylylation and deuridylylation, the PII regulatory proteins (GlnB and homologs), in response to the nitrogen status of the cell that GlnD senses through the glutamine level. Under low glutamine levels, catalyzes the conversion of the PII proteins and UTP to PII-UMP and PPi, while under higher glutamine levels, GlnD hydrolyzes PII-UMP to PII and UMP (deuridylylation). Thus, controls uridylylation state and activity of the PII proteins, and plays an important role in the regulation of nitrogen assimilation and metabolism. This is Bifunctional uridylyltransferase/uridylyl-removing enzyme from Legionella pneumophila (strain Lens).